The chain runs to 218 residues: ETS domain-containing protein ets-7 (218 aa).

The ETS DNA-binding region spans 12-93; the sequence is QRLLNFLRGL…KGKDSRYCFL (82 aa). Residues 131–161 show a composition bias toward low complexity; sequence TSNFSLQSSPSSSSNSSSARTMSATSSPTSS. Residues 131–162 are disordered; sequence TSNFSLQSSPSSSSNSSSARTMSATSSPTSSL.

The protein belongs to the ETS family.

Its subcellular location is the nucleus. Functionally, probable transcription factor. Involved in responses to oxidative stress. The chain is ETS domain-containing protein ets-7 from Caenorhabditis elegans.